The sequence spans 285 residues: Ribosomal RNA small subunit methyltransferase A (285 aa).

S-adenosyl-L-methionine is bound by residues Asn21, Leu23, Gly48, Glu69, Asp94, and Asn127.

Belongs to the class I-like SAM-binding methyltransferase superfamily. rRNA adenine N(6)-methyltransferase family. RsmA subfamily.

It is found in the cytoplasm. It catalyses the reaction adenosine(1518)/adenosine(1519) in 16S rRNA + 4 S-adenosyl-L-methionine = N(6)-dimethyladenosine(1518)/N(6)-dimethyladenosine(1519) in 16S rRNA + 4 S-adenosyl-L-homocysteine + 4 H(+). Its function is as follows. Specifically dimethylates two adjacent adenosines (A1518 and A1519) in the loop of a conserved hairpin near the 3'-end of 16S rRNA in the 30S particle. May play a critical role in biogenesis of 30S subunits. This Koribacter versatilis (strain Ellin345) protein is Ribosomal RNA small subunit methyltransferase A.